A 530-amino-acid polypeptide reads, in one-letter code: Sensor protein kinase PilS (530 aa).

The next 6 membrane-spanning stretches (helical) occupy residues 25–37, 57–70, 76–98, 101–119, 124–144, and 156–174; these read LTIG…LISS, WCYL…ALFL, LLPI…YAGG, PSGI…NILL, GLVI…FLSL, and AGGL…QALV. Over 175 to 530 the chain is Cytoplasmic; it reads RRQEQTETLA…ITFAHPRKLS (356 aa). Residues 196 to 260 form the PAS domain; sequence ELNALILQRM…KQWRLNPSLR (65 aa). In terms of domain architecture, Histidine kinase spans 316-527; it reads GIAHEIRNPL…CFRITFAHPR (212 aa). H319 carries the phosphohistidine; by autocatalysis modification.

Interacts with PilA.

It is found in the cell inner membrane. It catalyses the reaction ATP + protein L-histidine = ADP + protein N-phospho-L-histidine.. Member of the two-component regulatory system PilS/PilR that regulates the expression of multiple genes including the type IV pilus (T4P) major subunit PilA. Thereby, plays a major role in the regulation of multiple motility pathways. Functions as a membrane-associated protein kinase that phosphorylates PilR in response to environmental signals leading to activation of specific gene promoters including the pilin gene. In Pseudomonas aeruginosa (strain ATCC 15692 / DSM 22644 / CIP 104116 / JCM 14847 / LMG 12228 / 1C / PRS 101 / PAO1), this protein is Sensor protein kinase PilS (pilS).